The following is a 409-amino-acid chain: Lissencephaly-1 homolog (409 aa).

Residues 7 to 39 (QEEELRFAVADYLQSCGYTNALEAFKKDASIPK) form the LisH domain. Residues 56–81 (SVVRLQKKVMDLELRLNNTTREMNSG) adopt a coiled-coil conformation. Polar residues predominate over residues 75 to 92 (TREMNSGVPTRNSRSSND). The tract at residues 75–105 (TREMNSGVPTRNSRSSNDWIPRPPEKHSLSG) is disordered. WD repeat units lie at residues 105–146 (GHRS…RTLR), 147–186 (GHTD…CRMT), 189–228 (GHDH…CVYN), 231–270 (GHRE…CKEE), 273–332 (GHEH…CLFS), 335–374 (GHDN…CSKS), and 377–409 (AHNH…WECR).

The protein belongs to the WD repeat LIS1/nudF family.

The protein resides in the cytoplasm. It is found in the cytoskeleton. It localises to the microtubule organizing center. Its subcellular location is the centrosome. In terms of biological role, positively regulates the activity of the minus-end directed microtubule motor protein dynein. May enhance dynein-mediated microtubule sliding by targeting dynein to the microtubule plus end. Required for several dynein- and microtubule-dependent processes. The protein is Lissencephaly-1 homolog of Trichoplax adhaerens (Trichoplax reptans).